The primary structure comprises 424 residues: DNA repair protein Rad60 (424 aa).

The residue at position 26 (Tyr26) is a Phosphotyrosine. Phosphoserine is present on residues Ser32 and Ser34. Residues 45 to 177 form a disordered region; sequence LPKKSTKTGK…LTTTTSNSAS (133 aa). The span at 48–57 shows a compositional bias: basic residues; that stretch reads KSTKTGKRKN. Residues 77-93 are compositionally biased toward basic and acidic residues; it reads QAEHKAVEPEEDMRTER. Ser96 is subject to Phosphoserine. Over residues 104–123 the composition is skewed to basic and acidic residues; sequence EMEKKNGQQSDVEKHAKEND. Residues 156–166 are compositionally biased toward basic residues; it reads KPKKRGQKKRT. The span at 167–177 shows a compositional bias: low complexity; the sequence is SLTTTTSNSAS.

As to quaternary structure, forms a complex with dgrn; likely required for localization to the nuclear periphery. Interacts with the SMC5-SMC6 complex members SMC5 and SMC6/jnj following ionizing radiation (IR) to induce DNA damage. Interaction between the SMC5-SMC6 complex and the dgrn-Rad60 complex, may stabilize the association of heterochromatic DSBs with the nuclear periphery.

Its subcellular location is the nucleus. It localises to the nucleoplasm. Its function is as follows. Required for repair of DNA double strand breaks which occur during replication or are induced by ionizing radiation (IR). Functions with dgrn and downstream of the SMC5-SMC6 complex to regulate strand break repair. Likely functions by stabilizing the association of heterochromatic double strand breaks (DSBs) with the nuclear periphery as part of the homologous recombination (HR) repair process. This is DNA repair protein Rad60 from Drosophila melanogaster (Fruit fly).